Here is a 656-residue protein sequence, read N- to C-terminus: DNA topoisomerase 3 (656 aa).

The Toprim domain occupies Lys-2–Leu-156. Residues Asp-172–Trp-635 form the Topo IA-type catalytic domain. The active-site O-(5'-phospho-DNA)-tyrosine intermediate is Tyr-356.

It belongs to the type IA topoisomerase family. As to quaternary structure, forms a complex with SGS1 and RMI1. Interacts with SGS1.

It carries out the reaction ATP-independent breakage of single-stranded DNA, followed by passage and rejoining.. Its function is as follows. Releases the supercoiling and torsional tension of DNA introduced during the DNA replication and transcription by transiently cleaving and rejoining one strand of the DNA duplex. Introduces a single-strand break via transesterification at a target site in duplex DNA. The scissile phosphodiester is attacked by the catalytic tyrosine of the enzyme, resulting in the formation of a DNA-(5'-phosphotyrosyl)-enzyme intermediate and the expulsion of a 3'-OH DNA strand. The free DNA strand than undergoes passage around the unbroken strand thus removing DNA supercoils. Finally, in the religation step, the DNA 3'-OH attacks the covalent intermediate to expel the active-site tyrosine and restore the DNA phosphodiester backbone. Essential for proper chromosome segregation in both meiosis and mitosis. Weakly relaxes negative supercoils and displays a distinct preference for binding single-stranded DNA. The TOP3-SGS1 protein complex may function as a eukaryotic reverse gyrase introducing positive supercoils into extrachromosomal ribosomal DNA rings. This chain is DNA topoisomerase 3 (TOP3), found in Saccharomyces cerevisiae (strain ATCC 204508 / S288c) (Baker's yeast).